We begin with the raw amino-acid sequence, 477 residues long: Oxidative stress-induced growth inhibitor 1 (477 aa).

Ser-12 carries the post-translational modification Phosphoserine.

The protein belongs to the OKL38 family. The cofactor is NADPH. In terms of tissue distribution, ubiquitous. Highest expression in the ovary, testis, kidney, skeletal muscle and liver.

The protein localises to the midbody. Monooxygenase catalytic activity. Involved in regulation of cytokinesis; promotes RHOA activity, probably acting locally at the midbody in late cytokinesis. Monooxygenase activity is involved in stabilizing transient structures between daughter cells, termed intercellular bridges, before abscission. Regulates differentiation and proliferation through the regulation of cell death. This chain is Oxidative stress-induced growth inhibitor 1, found in Homo sapiens (Human).